The sequence spans 295 residues: Elongation factor Ts (295 aa).

The tract at residues 79-82 is involved in Mg(2+) ion dislocation from EF-Tu; that stretch reads TDFV.

Belongs to the EF-Ts family.

Its subcellular location is the cytoplasm. In terms of biological role, associates with the EF-Tu.GDP complex and induces the exchange of GDP to GTP. It remains bound to the aminoacyl-tRNA.EF-Tu.GTP complex up to the GTP hydrolysis stage on the ribosome. The chain is Elongation factor Ts from Bacillus anthracis (strain A0248).